We begin with the raw amino-acid sequence, 531 residues long: Bifunctional protein TrpGD (531 aa).

The Glutamine amidotransferase type-1 domain occupies 3 to 196; sequence DILLLDNIDS…LAWAQQKLEP (194 aa). Residue 57-59 coordinates L-glutamine; that stretch reads GPG. The Nucleophile; for GATase activity role is filled by C84. Residues Q88 and 134–135 each bind L-glutamine; that span reads SL. Active-site for GATase activity residues include H170 and E172. The tract at residues 202-531 is anthranilate phosphoribosyltransferase; that stretch reads PILEKLYQAQ…DRVTALAARG (330 aa).

The protein in the C-terminal section; belongs to the anthranilate phosphoribosyltransferase family. In terms of assembly, monomer. Heterotetramer consisting of two non-identical subunits: a beta subunit (TrpG) and a large alpha subunit (TrpE).

The enzyme catalyses chorismate + L-glutamine = anthranilate + pyruvate + L-glutamate + H(+). It carries out the reaction N-(5-phospho-beta-D-ribosyl)anthranilate + diphosphate = 5-phospho-alpha-D-ribose 1-diphosphate + anthranilate. It participates in amino-acid biosynthesis; L-tryptophan biosynthesis; L-tryptophan from chorismate: step 1/5. It functions in the pathway amino-acid biosynthesis; L-tryptophan biosynthesis; L-tryptophan from chorismate: step 2/5. With respect to regulation, cooperatively feedback inhibited by tryptophan. Functionally, part of a heterotetrameric complex that catalyzes the two-step biosynthesis of anthranilate, an intermediate in the biosynthesis of L-tryptophan. In the first step, the glutamine-binding beta subunit (TrpG) of anthranilate synthase (AS) provides the glutamine amidotransferase activity which generates ammonia as a substrate that, along with chorismate, is used in the second step, catalyzed by the large alpha subunit of AS (TrpE) to produce anthranilate. In the absence of TrpG, TrpE can synthesize anthranilate directly from chorismate and high concentrations of ammonia. In addition to synthesizing anthranilate, it also catalyzes the second step of the pathway, the transfer of the phosphoribosyl group of 5-phosphorylribose-1-pyrophosphate (PRPP) to anthranilate. The sequence is that of Bifunctional protein TrpGD (trpGD) from Salmonella typhimurium (strain LT2 / SGSC1412 / ATCC 700720).